The sequence spans 130 residues: Small ribosomal subunit protein uS8 (130 aa).

It belongs to the universal ribosomal protein uS8 family. Part of the 30S ribosomal subunit. Contacts proteins S5 and S12.

One of the primary rRNA binding proteins, it binds directly to 16S rRNA central domain where it helps coordinate assembly of the platform of the 30S subunit. This is Small ribosomal subunit protein uS8 from Yersinia enterocolitica serotype O:8 / biotype 1B (strain NCTC 13174 / 8081).